Consider the following 1003-residue polypeptide: UPF0182 protein Mkms_1433 (1003 aa).

Transmembrane regions (helical) follow at residues 18–38 (VLIGVALAAVVLLLIGPRFID), 63–83 (VVVFLVVSLLIGAIVFAGLAL), 114–134 (LFGFGVPAFIGILSGIVAQSY), 176–196 (FVATFLAFIANLLGHYLFGGI), 211–231 (IQLVTLVGILILLKAFAYWLD), 260–280 (KLILLAIAVICAVAVFSAIVL), and 288–308 (IGVVLLLLSSLVVGAGWPLVV). Residues 902-937 (ATGPAPANLPDGQPAAQPPNGQQPAAQTPGNQAGRA) show a composition bias toward low complexity. Residues 902-979 (ATGPAPANLP…MSGLQDAQRS (78 aa)) are disordered.

This sequence belongs to the UPF0182 family.

It localises to the cell membrane. The sequence is that of UPF0182 protein Mkms_1433 from Mycobacterium sp. (strain KMS).